The chain runs to 88 residues: DNA-directed RNA polymerase subunit omega (88 aa).

This sequence belongs to the RNA polymerase subunit omega family. In terms of assembly, the RNAP catalytic core consists of 2 alpha, 1 beta, 1 beta' and 1 omega subunit. When a sigma factor is associated with the core the holoenzyme is formed, which can initiate transcription.

The catalysed reaction is RNA(n) + a ribonucleoside 5'-triphosphate = RNA(n+1) + diphosphate. Its function is as follows. Promotes RNA polymerase assembly. Latches the N- and C-terminal regions of the beta' subunit thereby facilitating its interaction with the beta and alpha subunits. The protein is DNA-directed RNA polymerase subunit omega of Haemophilus influenzae (strain PittEE).